The primary structure comprises 253 residues: 5'-nucleotidase SurE (253 aa).

A divalent metal cation is bound by residues D8, D9, S39, and N97.

Belongs to the SurE nucleotidase family. A divalent metal cation is required as a cofactor.

Its subcellular location is the cytoplasm. The enzyme catalyses a ribonucleoside 5'-phosphate + H2O = a ribonucleoside + phosphate. Its function is as follows. Nucleotidase that shows phosphatase activity on nucleoside 5'-monophosphates. The chain is 5'-nucleotidase SurE from Aeromonas hydrophila subsp. hydrophila (strain ATCC 7966 / DSM 30187 / BCRC 13018 / CCUG 14551 / JCM 1027 / KCTC 2358 / NCIMB 9240 / NCTC 8049).